A 367-amino-acid polypeptide reads, in one-letter code: Ribosomal RNA large subunit methyltransferase M (367 aa).

S-adenosyl-L-methionine contacts are provided by residues Ser-189, 222–225 (CPGG), Asp-241, Asp-261, and Asp-278. Lys-307 functions as the Proton acceptor in the catalytic mechanism.

Belongs to the class I-like SAM-binding methyltransferase superfamily. RNA methyltransferase RlmE family. RlmM subfamily. Monomer.

The protein resides in the cytoplasm. The enzyme catalyses cytidine(2498) in 23S rRNA + S-adenosyl-L-methionine = 2'-O-methylcytidine(2498) in 23S rRNA + S-adenosyl-L-homocysteine + H(+). Functionally, catalyzes the 2'-O-methylation at nucleotide C2498 in 23S rRNA. This is Ribosomal RNA large subunit methyltransferase M from Shewanella denitrificans (strain OS217 / ATCC BAA-1090 / DSM 15013).